A 1102-amino-acid chain; its full sequence is Voltage-gated delayed rectifier potassium channel KCNH8 (1102 aa).

At 1 to 225 (MPVMKGLLAP…HFSTFKAGWD (225 aa)) the chain is on the cytoplasmic side. The PAS domain occupies 18 to 90 (IATRFDGTHS…LQIEKSLEEK (73 aa)). Residues 93-145 (FKGEIMFYKKNGAPFWCLLDIVPIKNEKGDVVLFLASFKDITDTKVKITSEDK) enclose the PAC domain. Basic and acidic residues predominate over residues 142–151 (SEDKKEDRTK). The tract at residues 142–162 (SEDKKEDRTKGRSRAGSHFDS) is disordered. A helical transmembrane segment spans residues 226–246 (WLILLATFYVAVTVPYNVCFI). The Extracellular portion of the chain corresponds to 247–255 (GNEDLSTTR). The chain crosses the membrane as a helical span at residues 256–276 (STTVSDIAVEILFIIDIILNF). Residues 277–298 (RTTYVSKSGQVIFEARSICIHY) lie on the Cytoplasmic side of the membrane. Residues 299–319 (VTTWFIIDLIAALPFDLLYAF) traverse the membrane as a helical segment. An N-linked (GlcNAc...) asparagine glycan is attached at Asn320. Over 320–327 (NVTVVSLV) the chain is Extracellular. A helical; Voltage-sensor transmembrane segment spans residues 328–348 (HLLKTVRLLRLLRLLQKLDRY). Over 349–357 (SQHSTIVLT) the chain is Cytoplasmic. Residues 358–378 (LLMSMFALLAHWMACIWYVIG) form a helical membrane-spanning segment. Residues 379–419 (KMEREDNSLLKWEVGWLHELGKRLESPYYGNNTLGGPSIRS) are Extracellular-facing. An N-linked (GlcNAc...) asparagine glycan is attached at Asn409. The pore-forming intramembrane region spans 420–440 (AYIAALYFTLSSLTSVGFGNV). The Selectivity filter motif lies at 434–439 (SVGFGN). Topologically, residues 441-448 (SANTDAEK) are extracellular. A helical transmembrane segment spans residues 449–469 (IFSICTMLIGALMHALVFGNV). At 470–1102 (TAIIQRMYSR…DVKDSKAINV (633 aa)) the chain is on the cytoplasmic side. A cNMP-binding domain region spans residues 551–668 (LFECASRGCL…HKFVEDIQHD (118 aa)). Residues 684-693 (RLSNKSTVSQ) are compositionally biased toward polar residues. 3 disordered regions span residues 684 to 743 (RLSN…KKTG), 764 to 841 (HSPI…PEPR), and 960 to 991 (LVGS…YSPS). The span at 710-723 (VEDEEEEEVEEEET) shows a compositional bias: acidic residues. A compositionally biased stretch (polar residues) spans 724-737 (TSLSPIYTRGSSVS). The segment covering 968 to 984 (TEAHEQNPADSELHHSP) has biased composition (basic and acidic residues).

Belongs to the potassium channel family. H (Eag) (TC 1.A.1.20) subfamily. Kv12.1/KCNH8 sub-subfamily. In terms of assembly, the potassium channel is probably composed of a homo- or heterotetrameric complex of pore-forming alpha subunits that can associate with modulating beta subunits.

The protein resides in the membrane. The enzyme catalyses K(+)(in) = K(+)(out). In terms of biological role, pore-forming (alpha) subunit of a voltage-gated delayed rectifier potassium channel that mediates outward-rectifying potassium currents. Elicits a slowly activating, non-inactivating and slowly deactivation outwards potassium current at depolarizating voltages from -30 mV to +50mV. Shows no obvious change in the activation rate from different holding potentials. Activation is strongly dependent on the pH of the external solution. The protein is Voltage-gated delayed rectifier potassium channel KCNH8 of Mus musculus (Mouse).